Here is a 168-residue protein sequence, read N- to C-terminus: Large ribosomal subunit protein uL10 (168 aa).

Belongs to the universal ribosomal protein uL10 family. Part of the ribosomal stalk of the 50S ribosomal subunit. The N-terminus interacts with L11 and the large rRNA to form the base of the stalk. The C-terminus forms an elongated spine to which L12 dimers bind in a sequential fashion forming a multimeric L10(L12)X complex.

In terms of biological role, forms part of the ribosomal stalk, playing a central role in the interaction of the ribosome with GTP-bound translation factors. In Lacticaseibacillus casei (strain BL23) (Lactobacillus casei), this protein is Large ribosomal subunit protein uL10.